A 274-amino-acid chain; its full sequence is NH(3)-dependent NAD(+) synthetase (274 aa).

46–53 (GISGGQDS) contacts ATP. Residue aspartate 52 coordinates Mg(2+). Arginine 140 contacts deamido-NAD(+). Position 160 (threonine 160) interacts with ATP. Mg(2+) is bound at residue glutamate 165. Positions 173 and 180 each coordinate deamido-NAD(+). ATP-binding residues include lysine 189 and threonine 211. Residue 260–261 (HK) coordinates deamido-NAD(+).

Belongs to the NAD synthetase family. Homodimer.

It catalyses the reaction deamido-NAD(+) + NH4(+) + ATP = AMP + diphosphate + NAD(+) + H(+). Its pathway is cofactor biosynthesis; NAD(+) biosynthesis; NAD(+) from deamido-NAD(+) (ammonia route): step 1/1. Its function is as follows. Catalyzes the ATP-dependent amidation of deamido-NAD to form NAD. Uses ammonia as a nitrogen source. This chain is NH(3)-dependent NAD(+) synthetase, found in Sodalis glossinidius (strain morsitans).